A 292-amino-acid chain; its full sequence is Elongation factor Ts (292 aa).

Positions 80–83 are involved in Mg(2+) ion dislocation from EF-Tu; it reads TDFV.

The protein belongs to the EF-Ts family.

The protein resides in the cytoplasm. Its function is as follows. Associates with the EF-Tu.GDP complex and induces the exchange of GDP to GTP. It remains bound to the aminoacyl-tRNA.EF-Tu.GTP complex up to the GTP hydrolysis stage on the ribosome. This Cupriavidus necator (strain ATCC 17699 / DSM 428 / KCTC 22496 / NCIMB 10442 / H16 / Stanier 337) (Ralstonia eutropha) protein is Elongation factor Ts.